Consider the following 149-residue polypeptide: Calmodulin (149 aa).

A2 carries the post-translational modification N-acetylalanine. EF-hand domains follow at residues 8–43, 44–79, 81–116, and 117–149; these read EQIA…VGQN, PTEA…KMKD, DSEE…LGEK, and LTDE…MMSK. D21, D23, D25, T27, E32, D57, D59, N61, T63, E68, D94, D96, N98, E105, D130, D132, D134, Q136, and E141 together coordinate Ca(2+).

It belongs to the calmodulin family.

Its function is as follows. Calmodulin mediates the control of a large number of enzymes, ion channels and other proteins by Ca(2+). Among the enzymes to be stimulated by the calmodulin-Ca(2+) complex are a number of protein kinases and phosphatases. The chain is Calmodulin (CMD1) from Achlya klebsiana.